The primary structure comprises 141 residues: Large ribosomal subunit protein bL17 (141 aa).

The protein belongs to the bacterial ribosomal protein bL17 family. In terms of assembly, part of the 50S ribosomal subunit. Contacts protein L32.

The polypeptide is Large ribosomal subunit protein bL17 (Maridesulfovibrio salexigens (strain ATCC 14822 / DSM 2638 / NCIMB 8403 / VKM B-1763) (Desulfovibrio salexigens)).